The chain runs to 86 residues: MAKLAICILVFALFALALSARVPREESNPAQEFLTKAQGDFNEFIEKLKALDAKKVEGLFKDGLNTVQEGLQKLNETFLQAPAAST.

Residues 1 to 19 (MAKLAICILVFALFALALS) form the signal peptide. 2 consecutive propeptides follow at residues 20–34 (ARVPREESNPAQEFL) and 45–86 (IEKL…AAST).

Hemolymph (at protein level).

Its subcellular location is the secreted. This chain is Neuropeptide-like 2 (Nplp2), found in Drosophila melanogaster (Fruit fly).